Consider the following 336-residue polypeptide: MSRVTLSRYLIEQTRSHNTPADLRFLIEVVARACKEISHAVSKGALGGVLGSMGTENVQGEVQKKLDVMSNEILLEANEWAGNLAGMASEEMDHPYQIPGRYPKGAYLLVFDPLDGSSNIDVNVSVGTIFSVLRCPNEYLNQNDTLREEAFLQPGTTQVAAGYAIYGPQTMLMLTLGNGVKGFTLDRELGSFVLTHDNISVPESTAEFAINMSNQRHWEAPVKRYVEELLAGKEGPLGKNYNMRWIASMVADVHRILTRGGVFMYPRDAREPEKPGKLRLMYEANPMSFIIEQAGGAATNGTQRILDIKPENLHQRVAVFLGSKQEVERITGYHAE.

Residues Glu90, Asp112, Leu114, and Asp115 each coordinate Mg(2+). Substrate contacts are provided by residues 115-118, Asn211, and Lys277; that span reads DGSS. Mg(2+) is bound at residue Glu283.

The protein belongs to the FBPase class 1 family. Homotetramer. The cofactor is Mg(2+).

It localises to the cytoplasm. The enzyme catalyses beta-D-fructose 1,6-bisphosphate + H2O = beta-D-fructose 6-phosphate + phosphate. The protein operates within carbohydrate biosynthesis; gluconeogenesis. The protein is Fructose-1,6-bisphosphatase class 1 of Pseudomonas aeruginosa (strain ATCC 15692 / DSM 22644 / CIP 104116 / JCM 14847 / LMG 12228 / 1C / PRS 101 / PAO1).